A 467-amino-acid chain; its full sequence is Mothers against decapentaplegic homolog 9 (467 aa).

The 125-residue stretch at 16–140 (PAVKRLLGWK…YRRVETPVLP (125 aa)) folds into the MH1 domain. Residues Cys68, Cys113, Cys125, and His130 each coordinate Zn(2+). A disordered region spans residues 174 to 246 (NATYPDSFQQ…SETQSGQPVD (73 aa)). Over residues 205–220 (SYPHSPGSPSEPESPY) the composition is skewed to low complexity. Positions 273–467 (WCSVAYYELN…SPHNPISSVS (195 aa)) constitute an MH2 domain.

Belongs to the dwarfin/SMAD family. Interaction with the co-SMAD SMAD4. Interacts with PEBP2-alpha subunit. Interacts with RANBP3L. Post-translationally, phosphorylated on serine by BMP (bone morphogenetic proteins) type 1 receptor kinase. In terms of tissue distribution, expressed in heart, brain, placenta, lung, skeletal muscle, prostate, testis, ovary and small intestine. Also expressed in fetal brain, lung and kidney.

It localises to the cytoplasm. Its subcellular location is the nucleus. Functionally, transcriptional modulator activated by BMP (bone morphogenetic proteins) type 1 receptor kinase. SMAD9 is a receptor-regulated SMAD (R-SMAD). This is Mothers against decapentaplegic homolog 9 (SMAD9) from Homo sapiens (Human).